We begin with the raw amino-acid sequence, 291 residues long: MEMO1 family protein TK1477 (291 aa).

The protein belongs to the MEMO1 family.

The sequence is that of MEMO1 family protein TK1477 from Thermococcus kodakarensis (strain ATCC BAA-918 / JCM 12380 / KOD1) (Pyrococcus kodakaraensis (strain KOD1)).